The following is a 327-amino-acid chain: Zinc transport protein ZntB (327 aa).

The Cytoplasmic segment spans residues 1-273 (MEAIKGSDVN…ARRTYTMSLM (273 aa)). A helical transmembrane segment spans residues 274-294 (AMVFLPSTFLTGLFGVNLGGI). The Periplasmic segment spans residues 295-300 (PGGGWQ). The helical transmembrane segment at 301–321 (FGFSIFCILLVVLIGGVALWL) threads the bilayer. At 322-327 (YRSKWL) the chain is on the cytoplasmic side.

Belongs to the CorA metal ion transporter (MIT) (TC 1.A.35) family.

The protein localises to the cell inner membrane. It catalyses the reaction Zn(2+)(out) + H(+)(out) = Zn(2+)(in) + H(+)(in). Functionally, zinc transporter. Acts as a Zn(2+):proton symporter, which likely mediates zinc ion uptake. This is Zinc transport protein ZntB from Shigella flexneri serotype 5b (strain 8401).